The following is a 417-amino-acid chain: Serine hydroxymethyltransferase (417 aa).

(6S)-5,6,7,8-tetrahydrofolate contacts are provided by residues L121 and 125–127 (GHL). The residue at position 229 (K229) is an N6-(pyridoxal phosphate)lysine. Residue 355–357 (SPF) coordinates (6S)-5,6,7,8-tetrahydrofolate.

It belongs to the SHMT family. Homodimer. Requires pyridoxal 5'-phosphate as cofactor.

It localises to the cytoplasm. The enzyme catalyses (6R)-5,10-methylene-5,6,7,8-tetrahydrofolate + glycine + H2O = (6S)-5,6,7,8-tetrahydrofolate + L-serine. It functions in the pathway one-carbon metabolism; tetrahydrofolate interconversion. It participates in amino-acid biosynthesis; glycine biosynthesis; glycine from L-serine: step 1/1. Its function is as follows. Catalyzes the reversible interconversion of serine and glycine with tetrahydrofolate (THF) serving as the one-carbon carrier. This reaction serves as the major source of one-carbon groups required for the biosynthesis of purines, thymidylate, methionine, and other important biomolecules. Also exhibits THF-independent aldolase activity toward beta-hydroxyamino acids, producing glycine and aldehydes, via a retro-aldol mechanism. In Salmonella arizonae (strain ATCC BAA-731 / CDC346-86 / RSK2980), this protein is Serine hydroxymethyltransferase.